Here is a 1178-residue protein sequence, read N- to C-terminus: DNA-directed RNA polymerase subunit beta' (1178 aa).

Residues Cys-60, Cys-62, Cys-75, and Cys-78 each coordinate Zn(2+). Mg(2+) is bound by residues Asp-450, Asp-452, and Asp-454. Zn(2+)-binding residues include Cys-795, Cys-869, Cys-876, and Cys-879.

It belongs to the RNA polymerase beta' chain family. The RNAP catalytic core consists of 2 alpha, 1 beta, 1 beta' and 1 omega subunit. When a sigma factor is associated with the core the holoenzyme is formed, which can initiate transcription. Mg(2+) is required as a cofactor. The cofactor is Zn(2+).

The catalysed reaction is RNA(n) + a ribonucleoside 5'-triphosphate = RNA(n+1) + diphosphate. DNA-dependent RNA polymerase catalyzes the transcription of DNA into RNA using the four ribonucleoside triphosphates as substrates. This is DNA-directed RNA polymerase subunit beta' from Clostridium botulinum (strain Okra / Type B1).